The chain runs to 453 residues: 3-phosphoshikimate 1-carboxyvinyltransferase (453 aa).

Positions M1–D27 are disordered. Residues K28, S29, and R33 each coordinate 3-phosphoshikimate. Phosphoenolpyruvate is bound at residue K28. G101 and R129 together coordinate phosphoenolpyruvate. 3-phosphoshikimate-binding residues include S175, Q177, D330, and K357. Residue Q177 participates in phosphoenolpyruvate binding. The Proton acceptor role is filled by D330. Phosphoenolpyruvate contacts are provided by R361 and R405.

It belongs to the EPSP synthase family. As to quaternary structure, monomer.

It localises to the cytoplasm. It catalyses the reaction 3-phosphoshikimate + phosphoenolpyruvate = 5-O-(1-carboxyvinyl)-3-phosphoshikimate + phosphate. It functions in the pathway metabolic intermediate biosynthesis; chorismate biosynthesis; chorismate from D-erythrose 4-phosphate and phosphoenolpyruvate: step 6/7. Functionally, catalyzes the transfer of the enolpyruvyl moiety of phosphoenolpyruvate (PEP) to the 5-hydroxyl of shikimate-3-phosphate (S3P) to produce enolpyruvyl shikimate-3-phosphate and inorganic phosphate. This Methylorubrum extorquens (strain CM4 / NCIMB 13688) (Methylobacterium extorquens) protein is 3-phosphoshikimate 1-carboxyvinyltransferase.